Consider the following 482-residue polypeptide: ATP synthase subunit beta (482 aa).

Residue 161-168 coordinates ATP; it reads GGAGVGKT.

Belongs to the ATPase alpha/beta chains family. In terms of assembly, F-type ATPases have 2 components, CF(1) - the catalytic core - and CF(0) - the membrane proton channel. CF(1) has five subunits: alpha(3), beta(3), gamma(1), delta(1), epsilon(1). CF(0) has four main subunits: a(1), b(1), b'(1) and c(9-12).

It is found in the cellular thylakoid membrane. It carries out the reaction ATP + H2O + 4 H(+)(in) = ADP + phosphate + 5 H(+)(out). Produces ATP from ADP in the presence of a proton gradient across the membrane. The catalytic sites are hosted primarily by the beta subunits. This Microcystis aeruginosa (strain NIES-843 / IAM M-2473) protein is ATP synthase subunit beta.